Consider the following 254-residue polypeptide: MTKLEICCYSVDCAQIAEKAGADRIELCCGQSEGGLTPSIGALMQARETVTIPVHPIVRPRGGDFCYSDNDFAIIKNDIARIRDMGFAGVVVGVLDIDGHIDMRRMREIMSVSGSLAVTFHRAFDMCQNPMIALQQLADLNVARILTSGQQQNAELGLALLKDLVAATQGQGPIIMAGAGVRLTNMQKFIDAGIRELHSSAGRTVPSTMKYRKAGVTMCADSDVDEFAHYCVDGEVVEAMKSLLVMGAPLPQSA.

It belongs to the CutC family.

The protein resides in the cytoplasm. In Yersinia enterocolitica serotype O:8 / biotype 1B (strain NCTC 13174 / 8081), this protein is PF03932 family protein CutC.